Consider the following 310-residue polypeptide: tRNA methyltransferase 10 homolog B (310 aa).

A coiled-coil region spans residues 55 to 94; the sequence is RKQRNWERRLEVKKSKRKEEKLRKKLNRQDKDVSDAQLSK. Positions 101-298 constitute an SAM-dependent MTase TRM10-type domain; it reads TKERLEGARA…AGIPPGKGFV (198 aa).

It belongs to the class IV-like SAM-binding methyltransferase superfamily. TRM10 family.

The catalysed reaction is guanosine(9) in tRNA + S-adenosyl-L-methionine = N(1)-methylguanosine(9) in tRNA + S-adenosyl-L-homocysteine + H(+). Functionally, S-adenosyl-L-methionine-dependent guanine N(1)-methyltransferase that catalyzes the formation of N(1)-methylguanine at position 9 (m1G9) in tRNAs. Probably not able to catalyze formation of N(1)-methyladenine at position 9 (m1A9) in tRNAs. The polypeptide is tRNA methyltransferase 10 homolog B (trmt10b) (Danio rerio (Zebrafish)).